The following is a 291-amino-acid chain: MFQKHLQKASDSVVGGTLYVVATPIGNLADITLRALAVLQKADIICAEDTRVTAQLLSAYGIQGKLVSVREHNERQMADKIVGYLSDGMVVAQVSDAGTPAVCDPGAKLARRVREVGFKVVPVVGASAVMAALSVAGVAGSDFYFNGFVPPKSGERRKLFAKWVRVAFPVVMFETPHRIGATLADMAELFPERRLMLAREITKTFETFLSGTVGEIQTALAADGNQSRGEMVLVLYPAQDEKHEGLSESAQNIMKILTAELPTKQAAELAAKITGEGKKALYDLALSWKNK.

This sequence belongs to the methyltransferase superfamily. RsmI family.

Its subcellular location is the cytoplasm. It catalyses the reaction cytidine(1402) in 16S rRNA + S-adenosyl-L-methionine = 2'-O-methylcytidine(1402) in 16S rRNA + S-adenosyl-L-homocysteine + H(+). Functionally, catalyzes the 2'-O-methylation of the ribose of cytidine 1402 (C1402) in 16S rRNA. In Neisseria meningitidis serogroup A / serotype 4A (strain DSM 15465 / Z2491), this protein is Ribosomal RNA small subunit methyltransferase I.